The primary structure comprises 254 residues: Small ribosomal subunit protein uS2 (254 aa).

Belongs to the universal ribosomal protein uS2 family.

This chain is Small ribosomal subunit protein uS2, found in Legionella pneumophila (strain Lens).